A 68-amino-acid chain; its full sequence is Large ribosomal subunit protein bL35 (68 aa).

Belongs to the bacterial ribosomal protein bL35 family.

This Onion yellows phytoplasma (strain OY-M) protein is Large ribosomal subunit protein bL35.